We begin with the raw amino-acid sequence, 340 residues long: Ketol-acid reductoisomerase (NADP(+)) (340 aa).

One can recognise a KARI N-terminal Rossmann domain in the interval 2-182; the sequence is ANIYYENHAD…GCTRAGVIET (181 aa). Residues 25 to 28, serine 51, serine 53, and 83 to 86 each bind NADP(+); these read FGSQ and DTAQ. Residue histidine 108 is part of the active site. Glycine 134 provides a ligand contact to NADP(+). Positions 183-328 constitute a KARI C-terminal knotted domain; the sequence is TFAEETETDL…RELRRMMPFV (146 aa). Mg(2+) contacts are provided by aspartate 191, glutamate 195, glutamate 227, and glutamate 231. Substrate is bound at residue serine 252.

The protein belongs to the ketol-acid reductoisomerase family. It depends on Mg(2+) as a cofactor.

The enzyme catalyses (2R)-2,3-dihydroxy-3-methylbutanoate + NADP(+) = (2S)-2-acetolactate + NADPH + H(+). It carries out the reaction (2R,3R)-2,3-dihydroxy-3-methylpentanoate + NADP(+) = (S)-2-ethyl-2-hydroxy-3-oxobutanoate + NADPH + H(+). It participates in amino-acid biosynthesis; L-isoleucine biosynthesis; L-isoleucine from 2-oxobutanoate: step 2/4. Its pathway is amino-acid biosynthesis; L-valine biosynthesis; L-valine from pyruvate: step 2/4. In terms of biological role, involved in the biosynthesis of branched-chain amino acids (BCAA). Catalyzes an alkyl-migration followed by a ketol-acid reduction of (S)-2-acetolactate (S2AL) to yield (R)-2,3-dihydroxy-isovalerate. In the isomerase reaction, S2AL is rearranged via a Mg-dependent methyl migration to produce 3-hydroxy-3-methyl-2-ketobutyrate (HMKB). In the reductase reaction, this 2-ketoacid undergoes a metal-dependent reduction by NADPH to yield (R)-2,3-dihydroxy-isovalerate. The polypeptide is Ketol-acid reductoisomerase (NADP(+)) (Roseiflexus castenholzii (strain DSM 13941 / HLO8)).